Reading from the N-terminus, the 432-residue chain is MYERRHERGMCDRAVEMTDVGATAAPTGPIARGSVARVGAATALAVACVYTVIYLAARDLPPACFSIFAVFWGALGIATGATHGLLQETTREVRWVRSTQIVAGHRTHPLRVAGMIGTVAAVVIAGSSPLWSRQLFVEGRWLSVGLLSVGVAGFCAQATLLGALAGVDRWTQYGSLMVTDAVIRLAVAAAAVVIGWGLAGYLWAATAGAVAWLLMLMASPTARSAASLLTPGGIATFVRGAAHSITAAGASAILVMGFPVLLKVTSDQLGAKGGAVILAVTLTRAPLLVPLSAMQGNLIAHFVDRRTQRLRALIAPALVVGGIGAVGMLAAGLTGPWLLRVGFGPDYQTGGALLAWLTAAAVAIAMLTLTGAAAVAAALHRAYLLGWVSATVASTLLLLLPMPLETRTVIALLFGPTVGIAIHVAALARRPD.

Transmembrane regions (helical) follow at residues Val-35–Leu-55, Leu-60–Gly-80, Val-112–Ser-132, Val-144–Leu-164, Leu-185–Ala-205, Ala-209–Leu-229, Ala-242–Leu-262, Gly-274–Met-294, Leu-313–Leu-333, Ala-359–Leu-379, Leu-384–Leu-404, and Thr-408–Ala-428.

The protein to M.tuberculosis Rv3630 and M.bovis Mb3654.

Its subcellular location is the cell membrane. This is an uncharacterized protein from Mycobacterium tuberculosis (strain CDC 1551 / Oshkosh).